Consider the following 221-residue polypeptide: PKHD-type hydroxylase P9215_13741 (221 aa).

In terms of domain architecture, Fe2OG dioxygenase spans 80–174 (RIHGTMFTKT…RFVVVGWIES (95 aa)). Residues histidine 98, aspartate 100, and histidine 155 each contribute to the Fe cation site. 2-oxoglutarate is bound at residue arginine 165.

The cofactor is Fe(2+). L-ascorbate serves as cofactor.

In Prochlorococcus marinus (strain MIT 9215), this protein is PKHD-type hydroxylase P9215_13741.